The following is a 914-amino-acid chain: Penicillin-binding protein 1A/1B (914 aa).

The interval 1 to 29 is disordered; it reads MSDQFNSREARRKANSKSSPSPKKGKKRK. The Cytoplasmic segment spans residues 1 to 37; it reads MSDQFNSREARRKANSKSSPSPKKGKKRKKGGLFKKT. A helical; Signal-anchor for type II membrane protein membrane pass occupies residues 38 to 58; it reads LFTLLILFVLGVVGGAVTFAV. Over 59-914 the chain is Extracellular; it reads MVSDAPSLDE…TNSSSIEKTN (856 aa). The interval 77–246 is transglycosylase; sequence STIYDKNGKE…TAYNPVKNPD (170 aa). The active-site Proton donor; for transglycosylase activity is the glutamate 115. The segment at 329 to 662 is transpeptidase; it reads TKAQDKLDEL…PDSVVEATVE (334 aa). Serine 390 serves as the catalytic Acyl-ester intermediate; for transpeptidase activity. Positions 708-795 constitute a Fibronectin type-III domain; that stretch reads KLSGLNVKYD…SYEVPKAEDD (88 aa). Positions 773-914 are disordered; that stretch reads TAVSDDGKST…TNSSSIEKTN (142 aa). Basic and acidic residues predominate over residues 798–828; sequence KKDQQQTDDEKQDDEKTQDDTQTDDSQKDDG. The span at 829–840 shows a compositional bias: acidic residues; it reads QTDQDQTDDSTN. 2 stretches are compositionally biased toward low complexity: residues 848–892 and 900–914; these read NTNT…GSDT and SNKT…EKTN.

It in the N-terminal section; belongs to the glycosyltransferase 51 family. This sequence in the C-terminal section; belongs to the transpeptidase family. The product expressed from the translation of the ponA gene appears as two bands on a gel (1A and 1B), but the specific amino acid sequence of each protein is unknown. In terms of processing, the N-terminus is blocked.

Its subcellular location is the cell membrane. It localises to the forespore inner membrane. It carries out the reaction [GlcNAc-(1-&gt;4)-Mur2Ac(oyl-L-Ala-gamma-D-Glu-L-Lys-D-Ala-D-Ala)](n)-di-trans,octa-cis-undecaprenyl diphosphate + beta-D-GlcNAc-(1-&gt;4)-Mur2Ac(oyl-L-Ala-gamma-D-Glu-L-Lys-D-Ala-D-Ala)-di-trans,octa-cis-undecaprenyl diphosphate = [GlcNAc-(1-&gt;4)-Mur2Ac(oyl-L-Ala-gamma-D-Glu-L-Lys-D-Ala-D-Ala)](n+1)-di-trans,octa-cis-undecaprenyl diphosphate + di-trans,octa-cis-undecaprenyl diphosphate + H(+). It catalyses the reaction Preferential cleavage: (Ac)2-L-Lys-D-Ala-|-D-Ala. Also transpeptidation of peptidyl-alanyl moieties that are N-acyl substituents of D-alanine.. The protein operates within cell wall biogenesis; peptidoglycan biosynthesis. Functionally, cell wall formation. Synthesis of cross-linked peptidoglycan from the lipid intermediates. The enzyme has a penicillin-insensitive transglycosylase N-terminal domain (formation of linear glycan strands) and a penicillin-sensitive transpeptidase C-terminal domain (cross-linking of the peptide subunits). Required for vegetative growth. Has a partially redundant function with PBP-2A (pbpA) during spore outgrowth. This Bacillus subtilis (strain 168) protein is Penicillin-binding protein 1A/1B (ponA).